Consider the following 390-residue polypeptide: MDQFIKQDETGDLIETGMNVANHFLSAPIQGTNSLSKASIIPGVAPVLIGNPEQKNIQHPTASHQGSKSKGSGSGVRSIIVPPSEASNGGTQIPEPLFAQTGQGGIVTTVYQDPTIQPTGSYRSVELAKIGKERMINRFVEKPRTSTPVTEFKRGAGSRAQGQTIQEEGIDGNGASAGSKERSGSLSGATLYAHLSLPQQDSTPANVGIAPQSAISANEIMDLLRGMDARLQHLEQKVDKVLAQGSMVTQIKNELSTVKTTLATIEGMMATVKIMDPGNPTGVPVDELRRSFSDHVTIVSGPGDVPFSSSEEPTLYLDELARPVSKPRPAKQTKPQPVKDLAGRKVMITKMITDCVANPQMKQAFEQRLAKASTEDALNDIKKDIIRSAI.

2 positions are modified to phosphothreonine: Thr10 and Thr16. Positions 54-65 (QKNIQHPTASHQ) are enriched in polar residues. 2 disordered regions span residues 54–98 (QKNI…EPLF) and 144–183 (RTSTPVTEFKRGAGSRAQGQTIQEEGIDGNGASAGSKERS). Ser69 is subject to Phosphoserine. Phosphothreonine occurs at positions 91, 150, and 164. Position 187 is a phosphoserine (Ser187). Thr249 bears the Phosphothreonine mark. Position 256 is a phosphoserine (Ser256). Phosphothreonine is present on residues Thr257 and Thr281. Phosphoserine is present on residues Ser291 and Ser293. Thr297 bears the Phosphothreonine mark. Phosphoserine is present on residues Ser300 and Ser373. Positions 342-390 (AGRKVMITKMITDCVANPQMKQAFEQRLAKASTEDALNDIKKDIIRSAI) are interaction with the nucleoprotein. Thr374 carries the phosphothreonine modification.

Belongs to the rubulavirus/avulavirus P protein family. In terms of assembly, homotetramer. Interacts (via multimerization domain) with polymerase L; this interaction forms the polymerase L-P complex. Interacts (via N-terminus) with N0 (via Ncore); this interaction allows P to chaperon N0 to avoid N polymerization before encapsidation. Interacts (via C-terminus) with N-RNA template; this interaction positions the polymerase on the template for both transcription and replication. Interacts with host RPS6KB1 kinase; this interaction may play a role in the viral replication and transcription.

Essential cofactor of the RNA polymerase L that plays a central role in the transcription and replication by forming the polymerase complex with RNA polymerase L and recruiting L to the genomic N-RNA template for RNA synthesis. Also plays a central role in the encapsidation of nascent RNA chains by forming the encapsidation complex with the nucleocapsid protein N (N-P complex). Acts as a chaperone for newly synthesized free N protein, so-called N0, allowing encapsidation of nascent RNA chains during replication. The nucleoprotein protein N prevents excessive phosphorylation of P, which leads to down-regulation of viral transcription/ replication. Participates, together with N, in the formation of viral factories (viroplasms), which are large inclusions in the host cytoplasm where replication takes place. The polypeptide is Phosphoprotein (P/V) (Homo sapiens (Human)).